Here is a 344-residue protein sequence, read N- to C-terminus: Dihydroorotate dehydrogenase (quinone) (344 aa).

FMN contacts are provided by residues 65-69 and T89; that span reads AGLDK. A substrate-binding site is contributed by K69. 114–118 is a binding site for substrate; the sequence is NRMGF. The FMN site is built by N145 and N178. N178 is a substrate binding site. S181 (nucleophile) is an active-site residue. Position 183 (N183) interacts with substrate. K223 and T251 together coordinate FMN. 252-253 serves as a coordination point for substrate; the sequence is NT. FMN is bound by residues G274, G303, and 324-325; that span reads YS.

It belongs to the dihydroorotate dehydrogenase family. Type 2 subfamily. As to quaternary structure, monomer. FMN serves as cofactor.

Its subcellular location is the cell membrane. The catalysed reaction is (S)-dihydroorotate + a quinone = orotate + a quinol. It participates in pyrimidine metabolism; UMP biosynthesis via de novo pathway; orotate from (S)-dihydroorotate (quinone route): step 1/1. Catalyzes the conversion of dihydroorotate to orotate with quinone as electron acceptor. The protein is Dihydroorotate dehydrogenase (quinone) of Cupriavidus taiwanensis (strain DSM 17343 / BCRC 17206 / CCUG 44338 / CIP 107171 / LMG 19424 / R1) (Ralstonia taiwanensis (strain LMG 19424)).